The sequence spans 1243 residues: Inositol hexakisphosphate and diphosphoinositol-pentakisphosphate kinase 2 (1243 aa).

S38 carries the post-translational modification Phosphoserine. Position 53–54 (53–54 (KK)) interacts with substrate. ATP-binding residues include R134, K187, H194, and R213. 213–214 (RK) contacts substrate. S223 carries the post-translational modification Phosphoserine. ATP-binding positions include 237–240 (EEFM) and 246–248 (DVK). 2 residues coordinate substrate: K248 and R262. ATP is bound by residues S264, D309, and 321 to 323 (DVN). 326–329 (SFVK) is a substrate binding site. Residues 371 to 442 (PTTSGTMMEL…VLDIARQLLM (72 aa)) are polyphosphoinositide-binding domain. Disordered regions lie at residues 898–941 (KGCE…RDEV) and 957–1016 (HIHR…SPVS). The span at 915–941 (ASRENEGRRPFKIDNDDEPHTSKRDEV) shows a compositional bias: basic and acidic residues. A compositionally biased stretch (basic residues) spans 958 to 969 (IHRKSPLPRSRK). Residues S1006, S1016, S1074, S1091, S1165, S1172, and S1180 each carry the phosphoserine modification. Residues 1185 to 1243 (TPAKILPTPPATLKSTKASSKPATSGPSSAVVPNTSSRKKNITSKTETHEHKKNTGKKK) are disordered. Residues 1195-1209 (ATLKSTKASSKPATS) are compositionally biased toward low complexity. Polar residues predominate over residues 1210–1220 (GPSSAVVPNTS). Phosphoserine occurs at positions 1220 and 1221.

The protein belongs to the histidine acid phosphatase family. VIP1 subfamily.

The protein localises to the cytoplasm. It localises to the cytosol. It catalyses the reaction 1D-myo-inositol hexakisphosphate + ATP = 1-diphospho-1D-myo-inositol 2,3,4,5,6-pentakisphosphate + ADP. It carries out the reaction 5-diphospho-1D-myo-inositol 1,2,3,4,6-pentakisphosphate + ATP + H(+) = 1,5-bis(diphospho)-1D-myo-inositol 2,3,4,6-tetrakisphosphate + ADP. In terms of biological role, bifunctional inositol kinase that acts in concert with the IP6K kinases IP6K1, IP6K2 and IP6K3 to synthesize the diphosphate group-containing inositol pyrophosphates diphosphoinositol pentakisphosphate, PP-InsP5, and bis-diphosphoinositol tetrakisphosphate, (PP)2-InsP4. PP-InsP5 and (PP)2-InsP4, also respectively called InsP7 and InsP8, regulate a variety of cellular processes, including apoptosis, vesicle trafficking, cytoskeletal dynamics, exocytosis, insulin signaling and neutrophil activation. Phosphorylates inositol hexakisphosphate (InsP6) at position 1 to produce PP-InsP5 which is in turn phosphorylated by IP6Ks to produce (PP)2-InsP4. Alternatively, phosphorylates PP-InsP5 at position 1, produced by IP6Ks from InsP6, to produce (PP)2-InsP4. Required for normal hearing. The polypeptide is Inositol hexakisphosphate and diphosphoinositol-pentakisphosphate kinase 2 (Homo sapiens (Human)).